The chain runs to 287 residues: Inorganic pyrophosphatase (287 aa).

Residue arginine 79 participates in diphosphate binding. Aspartate 116, aspartate 121, and aspartate 153 together coordinate Mg(2+).

The protein belongs to the PPase family. It depends on Mg(2+) as a cofactor.

It localises to the cytoplasm. The catalysed reaction is diphosphate + H2O = 2 phosphate + H(+). In Zygosaccharomyces bailii, this protein is Inorganic pyrophosphatase (IPP1).